The following is a 711-amino-acid chain: Receptor-like protein 43 (711 aa).

The first 30 residues, 1-30, serve as a signal peptide directing secretion; it reads MKGFWNSKSTIRITLSFIFLFISQFSDVLA. The Extracellular portion of the chain corresponds to 31 to 666; that stretch reads APTRHLCRPE…EDEEVISWIA (636 aa). 5 N-linked (GlcNAc...) asparagine glycosylation sites follow: Asn-78, Asn-114, Asn-143, Asn-167, and Asn-191. LRR repeat units lie at residues 120–143, 144–168, 170–192, 193–216, 218–240, 241–266, 268–288, and 289–316; these read LHFLTTLDLSFNDFKGQIMSSIEN, LSHLTYLDLSFNHFSGQVPSSIGNL, HLTFLDLYCNQFSGQVPSSIGNL, SHLTTLELSFNRFFGQFPSSIGGL, HLTTLNLFVNNFLGQIPSSIGNL, SNLTSLYLCKNNFSGQIPSFIGNLSQ, TRLDLSSNNFFGEIPGWLWTL, and PNLFYVNLSYNTFIGFQRPNKPEPSMGH. 4 N-linked (GlcNAc...) asparagine glycosylation sites follow: Asn-239, Asn-242, Asn-252, and Asn-263. Residues Asn-295, Asn-323, Asn-347, Asn-362, and Asn-372 are each glycosylated (N-linked (GlcNAc...) asparagine). The stretch at 317–334 is one LRR 9; degenerate repeat; the sequence is LLGSNNNFTGKIPSFICE. LRR repeat units follow at residues 335–358, 360–384, 386–406, 407–430, 431–452, 453–476, 519–543, 544–567, 568–591, and 593–616; these read LRSLETLDLSDNNFSGLIPRCMGN, KSNLSHLNLRQNNLSGGLPKHIFEI, RSLDVGHNQLVGKLPRSLRFF, STLEVLNVESNRINDTFPFWLTSL, PKLQVLVLRSNAFHGPIHEASF, LKLRIIDISHNHFNGTLPSDYFVK, LTIYTALDFSGNKFEGEIPKSIGLL, KELLVLNLSNNAFTGHIPSSMGKL, TALESLDVSQNKLYGEIPQEIGNL, and FLSCMNFSHNQLAGLVPGGQQFLT. N-linked (GlcNAc...) asparagine glycosylation occurs at Asn-420. N-linked (GlcNAc...) asparagine glycosylation occurs at Asn-466. 3 N-linked (GlcNAc...) asparagine glycosylation sites follow: Asn-550, Asn-590, and Asn-598. Residues 667 to 687 form a helical membrane-spanning segment; sequence AAIGFIPGIVLGLTIGYILVF. Residues 688-711 are Cytoplasmic-facing; sequence YKPEWFIKTFGRNNCRRRSTTTTH.

Belongs to the RLP family.

It is found in the cell membrane. In Arabidopsis thaliana (Mouse-ear cress), this protein is Receptor-like protein 43.